The following is a 297-amino-acid chain: UTP--glucose-1-phosphate uridylyltransferase YngB (297 aa).

Residues 1–27 form the signal peptide; that stretch reads MRKKVRKAVIPAAGLGTRFLPATKAQP.

This sequence belongs to the UDPGP type 2 family. Homodimer.

The enzyme catalyses alpha-D-glucose 1-phosphate + UTP + H(+) = UDP-alpha-D-glucose + diphosphate. Its pathway is glycolipid metabolism; diglucosyl-diacylglycerol biosynthesis. Functionally, catalyzes the formation of UDP-glucose from glucose-1-phosphate and UTP. This is an intermediate step in the biosynthesis of diglucosyl-diacylglycerol (Glc2-DAG), i.e. the predominant glycolipid found in B.subtilis membrane, which is also used as a membrane anchor for lipoteichoic acid (LTA). YngB contributes to wall teichoic acid (WTA) glucosylation and glycolipid formation under anaerobic fermentative growth conditions. Might also enter other glycosylation pathways, leading to the decorating of other cell envelope components with glucose residues under anaerobic or other growth conditions. In Bacillus subtilis (strain 168), this protein is UTP--glucose-1-phosphate uridylyltransferase YngB (yngB).